Here is a 182-residue protein sequence, read N- to C-terminus: Peptidoglycan L,D-endopeptidase MepK (182 aa).

Positions 1-30 form a signal peptide, tat-type signal; sequence MDKFDANRRKLLALGGVALGAAILPTPAFA. Positions 133, 140, and 173 each coordinate Zn(2+).

Belongs to the peptidase M15 family. The cofactor is Zn(2+). Predicted to be exported by the Tat system. The position of the signal peptide cleavage has not been experimentally proven.

It functions in the pathway cell wall biogenesis; cell wall polysaccharide biosynthesis. In terms of biological role, l,D-endopeptidase that cleaves meso-diaminopimelic acid (mDAP)-mDAP cross-links in peptidoglycan. It works in conjunction with other elongation-specific D,D-endopeptidases to make space for efficient incorporation of nascent peptidoglycan strands into the sacculus and thus enable cell wall expansion. This is Peptidoglycan L,D-endopeptidase MepK from Escherichia coli O157:H7.